The sequence spans 333 residues: Ketol-acid reductoisomerase (NADP(+)) (333 aa).

The KARI N-terminal Rossmann domain occupies Met1–Thr179. NADP(+) is bound by residues Tyr22–Gln25, Lys45, Ser48, Ser50, and Asp80–Gln83. Residue His105 is part of the active site. Gly131 contacts NADP(+). Residues Thr180–Val325 form the KARI C-terminal knotted domain. Mg(2+) is bound by residues Asp188, Glu192, Glu224, and Glu228. Ser249 provides a ligand contact to substrate.

Belongs to the ketol-acid reductoisomerase family. It depends on Mg(2+) as a cofactor.

It catalyses the reaction (2R)-2,3-dihydroxy-3-methylbutanoate + NADP(+) = (2S)-2-acetolactate + NADPH + H(+). The enzyme catalyses (2R,3R)-2,3-dihydroxy-3-methylpentanoate + NADP(+) = (S)-2-ethyl-2-hydroxy-3-oxobutanoate + NADPH + H(+). It functions in the pathway amino-acid biosynthesis; L-isoleucine biosynthesis; L-isoleucine from 2-oxobutanoate: step 2/4. The protein operates within amino-acid biosynthesis; L-valine biosynthesis; L-valine from pyruvate: step 2/4. In terms of biological role, involved in the biosynthesis of branched-chain amino acids (BCAA). Catalyzes an alkyl-migration followed by a ketol-acid reduction of (S)-2-acetolactate (S2AL) to yield (R)-2,3-dihydroxy-isovalerate. In the isomerase reaction, S2AL is rearranged via a Mg-dependent methyl migration to produce 3-hydroxy-3-methyl-2-ketobutyrate (HMKB). In the reductase reaction, this 2-ketoacid undergoes a metal-dependent reduction by NADPH to yield (R)-2,3-dihydroxy-isovalerate. The protein is Ketol-acid reductoisomerase (NADP(+)) of Mycobacterium bovis (strain ATCC BAA-935 / AF2122/97).